Consider the following 137-residue polypeptide: NADH dehydrogenase [ubiquinone] 1 beta subcomplex subunit 7 (137 aa).

A lipid anchor (N-myristoyl glycine) is attached at Gly-2. The CHCH domain occupies 56–98 (RDYCAHYLIRLLKCKRDSFPNFLACKQERHDWDYCEHRDYVMR). A Cx9C motif 1 motif is present at residues 59 to 69 (CAHYLIRLLKC). Intrachain disulfides connect Cys-59-Cys-90 and Cys-69-Cys-80. At Ser-73 the chain carries Phosphoserine. The short motif at 80–90 (CKQERHDWDYC) is the Cx9C motif 2 element. Positions 113–137 (KRREKKAAELAKGQGPGEVDPKVAL) are disordered.

The protein belongs to the complex I NDUFB7 subunit family. Complex I is composed of 45 different subunits.

The protein localises to the mitochondrion inner membrane. Its subcellular location is the mitochondrion intermembrane space. In terms of biological role, accessory subunit of the mitochondrial membrane respiratory chain NADH dehydrogenase (Complex I), that is believed not to be involved in catalysis. Complex I functions in the transfer of electrons from NADH to the respiratory chain. The immediate electron acceptor for the enzyme is believed to be ubiquinone. This Gorilla gorilla gorilla (Western lowland gorilla) protein is NADH dehydrogenase [ubiquinone] 1 beta subcomplex subunit 7 (NDUFB7).